The following is a 376-amino-acid chain: Succinyl-diaminopimelate desuccinylase (376 aa).

Histidine 66 is a Zn(2+) binding site. Residue aspartate 68 is part of the active site. Residue aspartate 99 participates in Zn(2+) binding. Residue glutamate 133 is the Proton acceptor of the active site. Positions 134, 162, and 349 each coordinate Zn(2+).

The protein belongs to the peptidase M20A family. DapE subfamily. In terms of assembly, homodimer. Requires Zn(2+) as cofactor. Co(2+) is required as a cofactor.

The enzyme catalyses N-succinyl-(2S,6S)-2,6-diaminopimelate + H2O = (2S,6S)-2,6-diaminopimelate + succinate. It participates in amino-acid biosynthesis; L-lysine biosynthesis via DAP pathway; LL-2,6-diaminopimelate from (S)-tetrahydrodipicolinate (succinylase route): step 3/3. Functionally, catalyzes the hydrolysis of N-succinyl-L,L-diaminopimelic acid (SDAP), forming succinate and LL-2,6-diaminopimelate (DAP), an intermediate involved in the bacterial biosynthesis of lysine and meso-diaminopimelic acid, an essential component of bacterial cell walls. The sequence is that of Succinyl-diaminopimelate desuccinylase from Buchnera aphidicola subsp. Cinara cedri (strain Cc).